We begin with the raw amino-acid sequence, 267 residues long: tRNA pseudouridine synthase A (267 aa).

Aspartate 53 functions as the Nucleophile in the catalytic mechanism. Substrate is bound at residue tyrosine 111.

It belongs to the tRNA pseudouridine synthase TruA family. As to quaternary structure, homodimer.

The catalysed reaction is uridine(38/39/40) in tRNA = pseudouridine(38/39/40) in tRNA. Its function is as follows. Formation of pseudouridine at positions 38, 39 and 40 in the anticodon stem and loop of transfer RNAs. The polypeptide is tRNA pseudouridine synthase A (Alcanivorax borkumensis (strain ATCC 700651 / DSM 11573 / NCIMB 13689 / SK2)).